We begin with the raw amino-acid sequence, 152 residues long: Glutamyl-tRNA(Gln) amidotransferase subunit F, mitochondrial (152 aa).

Belongs to the GatF family. As to quaternary structure, subunit of the heterotrimeric GatFAB amidotransferase (AdT) complex, composed of A, B and F subunits.

The protein resides in the mitochondrion inner membrane. The catalysed reaction is L-glutamyl-tRNA(Gln) + L-glutamine + ATP + H2O = L-glutaminyl-tRNA(Gln) + L-glutamate + ADP + phosphate + H(+). Functionally, allows the formation of correctly charged Gln-tRNA(Gln) through the transamidation of misacylated Glu-tRNA(Gln) in the mitochondria. The reaction takes place in the presence of glutamine and ATP through an activated gamma-phospho-Glu-tRNA(Gln). Required for proper protein synthesis within the mitochondrion. In Komagataella phaffii (strain GS115 / ATCC 20864) (Yeast), this protein is Glutamyl-tRNA(Gln) amidotransferase subunit F, mitochondrial.